The primary structure comprises 569 residues: Alpha-amylase (569 aa).

Positions 1 to 28 are cleaved as a signal peptide; the sequence is MARKTVAAALALVAGAAVAVTGNAPAQA. Positions 120, 166, and 175 each coordinate Ca(2+). Asp205 functions as the Nucleophile in the catalytic mechanism. His209 contacts Ca(2+). Glu232 acts as the Proton donor in catalysis. One can recognise a CBM20 domain in the interval 468 to 569; that stretch reads TTPPATSGAS…QLVLNDTFRS (102 aa).

This sequence belongs to the glycosyl hydrolase 13 family. As to quaternary structure, monomer. The cofactor is Ca(2+).

The catalysed reaction is Endohydrolysis of (1-&gt;4)-alpha-D-glucosidic linkages in polysaccharides containing three or more (1-&gt;4)-alpha-linked D-glucose units.. The chain is Alpha-amylase (aml) from Streptomyces violaceus (Streptomyces venezuelae).